The sequence spans 117 residues: Immunoglobulin heavy variable 4-4 (117 aa).

The N-terminal stretch at 1 to 19 (MKHLWFFLLLVAAPRWVLS) is a signal peptide. Residues 20–44 (QVQLQESGPGLVKPSGTLSLTCAVS) form a framework-1 region. Residues 20–117 (QVQLQESGPG…ADTAVYYCAR (98 aa)) enclose the Ig-like domain. Cysteine 41 and cysteine 115 are joined by a disulfide. A complementarity-determining-1 region spans residues 45 to 53 (GGSISSSNW). The tract at residues 54-70 (WSWVRQPPGKGLEWIGE) is framework-2. Residues 71-77 (IYHSGST) form a complementarity-determining-2 region. The framework-3 stretch occupies residues 78 to 115 (NYNPSLKSRVTISVDKSKNQFSLKLSSVTAADTAVYYC). Residues 116–117 (AR) form a complementarity-determining-3 region.

Immunoglobulins are composed of two identical heavy chains and two identical light chains; disulfide-linked.

It is found in the secreted. It localises to the cell membrane. In terms of biological role, v region of the variable domain of immunoglobulin heavy chains that participates in the antigen recognition. Immunoglobulins, also known as antibodies, are membrane-bound or secreted glycoproteins produced by B lymphocytes. In the recognition phase of humoral immunity, the membrane-bound immunoglobulins serve as receptors which, upon binding of a specific antigen, trigger the clonal expansion and differentiation of B lymphocytes into immunoglobulins-secreting plasma cells. Secreted immunoglobulins mediate the effector phase of humoral immunity, which results in the elimination of bound antigens. The antigen binding site is formed by the variable domain of one heavy chain, together with that of its associated light chain. Thus, each immunoglobulin has two antigen binding sites with remarkable affinity for a particular antigen. The variable domains are assembled by a process called V-(D)-J rearrangement and can then be subjected to somatic hypermutations which, after exposure to antigen and selection, allow affinity maturation for a particular antigen. This is Immunoglobulin heavy variable 4-4 from Homo sapiens (Human).